A 28-amino-acid chain; its full sequence is Humanin-like 2 (28 aa).

This sequence belongs to the humanin family. As to expression, highly expressed in testis. Also expressed in kidney, heart, skeletal muscles and brain.

It is found in the secreted. It localises to the cytoplasm. Its function is as follows. Plays a role as a neuroprotective and antiapoptotic factor. In Homo sapiens (Human), this protein is Humanin-like 2.